The following is a 343-amino-acid chain: Holliday junction branch migration complex subunit RuvB (343 aa).

The interval 4-193 (TDNLTAAQPQ…FGIVSRLEFY (190 aa)) is large ATPase domain (RuvB-L). Residues L32, R33, G74, K77, T78, T79, 140 to 142 (EDY), R183, Y193, and R230 each bind ATP. T78 is a Mg(2+) binding site. Residues 194–264 (ENRDLTTIVS…IADAALSMLD (71 aa)) form a small ATPAse domain (RuvB-S) region. The tract at residues 267–343 (AQGLDVMDRK…YLHFGLPVEK (77 aa)) is head domain (RuvB-H). DNA is bound by residues R322 and R327.

Belongs to the RuvB family. In terms of assembly, homohexamer. Forms an RuvA(8)-RuvB(12)-Holliday junction (HJ) complex. HJ DNA is sandwiched between 2 RuvA tetramers; dsDNA enters through RuvA and exits via RuvB. An RuvB hexamer assembles on each DNA strand where it exits the tetramer. Each RuvB hexamer is contacted by two RuvA subunits (via domain III) on 2 adjacent RuvB subunits; this complex drives branch migration. In the full resolvosome a probable DNA-RuvA(4)-RuvB(12)-RuvC(2) complex forms which resolves the HJ.

Its subcellular location is the cytoplasm. It catalyses the reaction ATP + H2O = ADP + phosphate + H(+). Its function is as follows. The RuvA-RuvB-RuvC complex processes Holliday junction (HJ) DNA during genetic recombination and DNA repair, while the RuvA-RuvB complex plays an important role in the rescue of blocked DNA replication forks via replication fork reversal (RFR). RuvA specifically binds to HJ cruciform DNA, conferring on it an open structure. The RuvB hexamer acts as an ATP-dependent pump, pulling dsDNA into and through the RuvAB complex. RuvB forms 2 homohexamers on either side of HJ DNA bound by 1 or 2 RuvA tetramers; 4 subunits per hexamer contact DNA at a time. Coordinated motions by a converter formed by DNA-disengaged RuvB subunits stimulates ATP hydrolysis and nucleotide exchange. Immobilization of the converter enables RuvB to convert the ATP-contained energy into a lever motion, pulling 2 nucleotides of DNA out of the RuvA tetramer per ATP hydrolyzed, thus driving DNA branch migration. The RuvB motors rotate together with the DNA substrate, which together with the progressing nucleotide cycle form the mechanistic basis for DNA recombination by continuous HJ branch migration. Branch migration allows RuvC to scan DNA until it finds its consensus sequence, where it cleaves and resolves cruciform DNA. The polypeptide is Holliday junction branch migration complex subunit RuvB (Neisseria meningitidis serogroup C (strain 053442)).